The following is a 60-amino-acid chain: Metallothionein (60 aa).

Residue M1 is modified to N-acetylmethionine. Residues 1–28 are beta; that stretch reads MDPCECSKTGTCNCGGSCTCKNCSCTTC. C4, C6, C12, C14, C18, C20, C23, C25, C28, C32, C33, C35, C36, C40, C43, C47, C49, C54, C58, and C59 together coordinate a divalent metal cation. Residues 29–60 are alpha; the sequence is NKSCCPCCPSGCPKCASGCVCKGKTCDTSCCQ.

The protein belongs to the metallothionein superfamily. Type 1 family.

Metallothioneins have a high content of cysteine residues that bind various heavy metals. The polypeptide is Metallothionein (mt) (Pleuronectes platessa (European plaice)).